The sequence spans 81 residues: Sulfur carrier protein TusA (81 aa).

C19 (cysteine persulfide intermediate) is an active-site residue.

The protein belongs to the sulfur carrier protein TusA family.

It is found in the cytoplasm. Its function is as follows. Sulfur carrier protein which probably makes part of a sulfur-relay system. The polypeptide is Sulfur carrier protein TusA (Shewanella frigidimarina (strain NCIMB 400)).